A 411-amino-acid chain; its full sequence is MTPNSMTENGLPAWDKPKPCPDGEPEWKLVGMSEACLHRKSHPERRGPLKHEQSPLIQASWTSSIFHLDHDDVSDQSAPSAQAFQTEEKKCKGYIPSYLDKDELCVVCGDKATGYHYRCITCEGCKGFFRRTIQKNLHPSYSCKYEGKCVIDKVTRNQCQECRFKKCIYVGMATDLVLDDSKRLAKRKLIEENREKRRREELQRSMGHKPEPTDQEWELIKTVTEAHVATNAQGSHWKQKRKFLPEDIGQAPIVNAPEGGKVDLEAFSHFTKIITPAITRVVDFAKKLPMFCELPCEDQIILLKGCCMEIMSLRAAVRYDPESETLTLNGEMAVTRRQLKNGGLGVVSDAIFDLGMSLSSFNLDDTEVALLQAVLLMSSDRPGLACVERIEKYQDSFLLAFEHYINYRRNS.

A disordered region spans residues 1–24 (MTPNSMTENGLPAWDKPKPCPDGE). Residues 1–104 (MTPNSMTENG…IPSYLDKDEL (104 aa)) form a modulating region. Basic and acidic residues predominate over residues 15-24 (DKPKPCPDGE). Zn(2+)-binding residues include cysteine 105, cysteine 108, cysteine 122, cysteine 125, cysteine 143, cysteine 149, cysteine 159, and cysteine 162. 2 consecutive NR C4-type zinc fingers follow at residues 105–125 (CVVC…CEGC) and 143–167 (CKYE…FKKC). The segment at residues 105–179 (CVVCGDKATG…VGMATDLVLD (75 aa)) is a DNA-binding region (nuclear receptor). The 197-residue stretch at 215–411 (QEWELIKTVT…EHYINYRRNS (197 aa)) folds into the NR LBD domain. The segment at 242–411 (KFLPEDIGQA…EHYINYRRNS (170 aa)) is interaction with NR2F6. 3,3',5-triiodo-L-thyronine is bound by residues arginine 280 and asparagine 329. The L-thyroxine site is built by arginine 280 and asparagine 329.

This sequence belongs to the nuclear hormone receptor family. NR1 subfamily. In terms of assembly, binds DNA as a dimer; homodimer and heterodimer with RXRA. Interacts with the coactivators NCOA1/SRC1, NCOA2/GRIP1, NCOA7 and MED1/TRAP220 in a ligand-inducible manner. Interacts with the corepressor NCOR1 in absence of ligand. Interacts with C1D. Interacts with NR2F6; the interaction impairs the binding of the THRB homodimer and THRB:RXRB heterodimer to T3 response elements. Interacts with PRMT2 and THRSP. Interacts with TACC1; this interaction is decreased in the presence of thyroid hormone T3.

Its subcellular location is the nucleus. Its function is as follows. Nuclear hormone receptor that can act as a repressor or activator of transcription. High affinity receptor for thyroid hormones, including triiodothyronine and thyroxine. The sequence is that of Thyroid hormone receptor beta (THRB) from Ovis aries (Sheep).